Here is a 190-residue protein sequence, read N- to C-terminus: MKLVVGLGNPEPRYAGTRHNVGFDVLDTLAATFQTRFGKGKGNYLSTKISHRNRSVILLKPMTYMNLSGHAVVAAMNFYKVSESGLLIVCDDLNLPAGSIRLRAKGSAGGQNGLKHIIECLGSEGFARLRVGIRPLDRPLHSFSSFVLGKFTEEERIVMEKVIPVCREAALDVVVNGIEHAMNNYNKPII.

Tyrosine 14 is a binding site for tRNA. Histidine 19 functions as the Proton acceptor in the catalytic mechanism. Residues tyrosine 64, asparagine 66, and asparagine 112 each contribute to the tRNA site.

It belongs to the PTH family. As to quaternary structure, monomer.

Its subcellular location is the cytoplasm. The enzyme catalyses an N-acyl-L-alpha-aminoacyl-tRNA + H2O = an N-acyl-L-amino acid + a tRNA + H(+). In terms of biological role, hydrolyzes ribosome-free peptidyl-tRNAs (with 1 or more amino acids incorporated), which drop off the ribosome during protein synthesis, or as a result of ribosome stalling. Catalyzes the release of premature peptidyl moieties from peptidyl-tRNA molecules trapped in stalled 50S ribosomal subunits, and thus maintains levels of free tRNAs and 50S ribosomes. The protein is Peptidyl-tRNA hydrolase of Chlorobium phaeobacteroides (strain DSM 266 / SMG 266 / 2430).